We begin with the raw amino-acid sequence, 438 residues long: Thymidine phosphorylase (438 aa).

It belongs to the thymidine/pyrimidine-nucleoside phosphorylase family. Homodimer.

The catalysed reaction is thymidine + phosphate = 2-deoxy-alpha-D-ribose 1-phosphate + thymine. It participates in pyrimidine metabolism; dTMP biosynthesis via salvage pathway; dTMP from thymine: step 1/2. Its function is as follows. The enzymes which catalyze the reversible phosphorolysis of pyrimidine nucleosides are involved in the degradation of these compounds and in their utilization as carbon and energy sources, or in the rescue of pyrimidine bases for nucleotide synthesis. This Burkholderia orbicola (strain AU 1054) protein is Thymidine phosphorylase.